Reading from the N-terminus, the 326-residue chain is Protein TMED8 (326 aa).

The disordered stretch occupies residues 1–99 (MSDRQAAEGP…EGQAPGEQAA (99 aa)). Residues 50-65 (SSPLASASDPAAESSP) show a composition bias toward low complexity. A GOLD domain is found at 160 to 324 (PPCVWTFAKV…NKTLYFHIYY (165 aa)). Lys170 bears the N6-acetyllysine mark. Residues 234-268 (VQVSDSSEDEEEEEDEEEEIEEPVPVGDVERGSRS) form a disordered region. Residues 239–255 (SSEDEEEEEDEEEEIEE) show a composition bias toward acidic residues.

This chain is Protein TMED8 (Tmed8), found in Mus musculus (Mouse).